Consider the following 355-residue polypeptide: MPSSQAQADLWRHTLYYLTSMGLRCAVKLGIPTAIHNLGGVSSLPDLAAALSIPASKQPFLGRLMRALVTSGVFANGKERLLGGLFRLNPLSRILVEGVVAEEHHSQTSFVLAGTSRHYMEAALGMADWFKKDATGPVPTVFEDVHSASLFDESTAALDPELDALVTEGLAAHDNLGIGTIIREFHDLFKGLVSLTDFCCGDGTTSRAITKAHPHVKFTVLDLPKVIDKTPSDGIVNYFAGDLFHTVPKAQAVMLKLVLHHLSYEDCFKILTQCKDAIPSREEGGKVIVIDIVVAPSLGQVMFKEQTLMDILMLVFTRGRQRSENNWHELFTKAGFSDYKIVKKLGARGVIEVYK.

The S-adenosyl-L-homocysteine site is built by aspartate 222, aspartate 242, and lysine 256. Catalysis depends on histidine 260, which acts as the Proton acceptor.

The protein belongs to the class I-like SAM-binding methyltransferase superfamily. Cation-independent O-methyltransferase family. COMT subfamily.

It catalyses the reaction 7,8-dihydroxycoumarin + S-adenosyl-L-methionine = 7-hydroxy-8-methoxycoumarin + S-adenosyl-L-homocysteine + H(+). It participates in aromatic compound metabolism. Its pathway is secondary metabolite biosynthesis. Its function is as follows. O-methyltransferase involved in the biosynthesis of coumarins natural products such as daphnetin derivatives. Catalyzes specifically the methylation of daphnetin (7,8-dihydroxycoumarin) to produce hydrangetin (7-hydroxy-8-methoxycoumarin). Probably involved in acclimation to low temperature conditions. This chain is Daphnetin O-methyltransferase 1, found in Secale cereale (Rye).